The chain runs to 178 residues: MVKYTEDRLLELKEETYIPQPQILEAFNQMIESVKEHAAAEAEKHKAIKWNNGDTYIDEHGNERPYHHMNRRRASRTANKPSLRKKSVENVDEDGWATLSKPKRSFGADEGLEERAKFRESVREGTVGGSGTVKAKPNNKNLGSSKAVDPRDAIADKHTTTFNAFEALGDGDDDDDDE.

Residues 61–155 (GNERPYHHMN…KAVDPRDAIA (95 aa)) form a disordered region. A compositionally biased stretch (basic and acidic residues) spans 113–123 (EERAKFRESVR).

Belongs to the CAF20 family.

It localises to the cytoplasm. Acts as an inhibitor of cap-dependent translation. Competes with eIF4G1 and EAP1 for binding to eIF4E and interferes with the formation of the eIF4F complex, inhibiting translation and stabilizing mRNA. In Scheffersomyces stipitis (strain ATCC 58785 / CBS 6054 / NBRC 10063 / NRRL Y-11545) (Yeast), this protein is Cap-associated protein CAF20 (CAF20).